Reading from the N-terminus, the 1013-residue chain is Polyprotein of EF-Ts, chloroplastic (1013 aa).

A chloroplast-targeting transit peptide spans 1-43 (MLRELGRTATVKAHGRSVLRPVRGPAGRRQVAFTGVRPSVRVF). Positions 64-133 (GSEYEGTVTT…EKKRVSLELK (70 aa)) constitute an S1 motif 1 domain. The segment covering 141 to 150 (SAEESDDIIT) has biased composition (acidic residues). A disordered region spans residues 141-163 (SAEESDDIITEPDREGADATDDD). Positions 227–331 (MEEVTGKVAR…DGRGISLTHF (105 aa)) constitute an S1 motif 2 domain. The segment at 772-798 (QAKAAAPAAPKKEEPKKEEPKKATVAV) is disordered. Residues 781-793 (PKKEEPKKEEPKK) are compositionally biased toward basic and acidic residues.

It belongs to the EF-Ts family. In terms of assembly, component of the chloroplast ribosome 30S and 70S subunits, as well as polysomes. Component of the chloroplast ribosome 70S subunit, and at low levels, present in polysomes. As to quaternary structure, associates transiently with chloroplast polysomes.

The protein resides in the plastid. Its subcellular location is the chloroplast. Functionally, associates with the EF-Tu.GDP complex and induces the exchange of GDP to GTP. It remains bound to the aminoacyl-tRNA.EF-Tu.GTP complex up to the GTP hydrolysis stage on the ribosome. In terms of biological role, binds to psbD and psbA mRNAs 5'-untranslated regions (UTRs) in vitro. This chain is Polyprotein of EF-Ts, chloroplastic, found in Chlamydomonas reinhardtii (Chlamydomonas smithii).